Here is a 151-residue protein sequence, read N- to C-terminus: tRNA-specific adenosine deaminase (151 aa).

The 119-residue stretch at Asn-4–Leu-122 folds into the CMP/dCMP-type deaminase domain. Residue His-55 coordinates Zn(2+). Glu-57 (proton donor) is an active-site residue. Cys-85 and Cys-88 together coordinate Zn(2+).

Belongs to the cytidine and deoxycytidylate deaminase family. As to quaternary structure, homodimer. It depends on Zn(2+) as a cofactor.

The enzyme catalyses adenosine(34) in tRNA + H2O + H(+) = inosine(34) in tRNA + NH4(+). In terms of biological role, catalyzes the deamination of adenosine to inosine at the wobble position 34 of tRNA(Arg2). This is tRNA-specific adenosine deaminase from Buchnera aphidicola subsp. Schizaphis graminum (strain Sg).